The primary structure comprises 72 residues: Translation initiation factor IF-1 (72 aa).

The S1-like domain occupies 1–72 (MAKEGNIEME…SKGRIVYRAR (72 aa)).

The protein belongs to the IF-1 family. In terms of assembly, component of the 30S ribosomal translation pre-initiation complex which assembles on the 30S ribosome in the order IF-2 and IF-3, IF-1 and N-formylmethionyl-tRNA(fMet); mRNA recruitment can occur at any time during PIC assembly.

Its subcellular location is the cytoplasm. Functionally, one of the essential components for the initiation of protein synthesis. Stabilizes the binding of IF-2 and IF-3 on the 30S subunit to which N-formylmethionyl-tRNA(fMet) subsequently binds. Helps modulate mRNA selection, yielding the 30S pre-initiation complex (PIC). Upon addition of the 50S ribosomal subunit IF-1, IF-2 and IF-3 are released leaving the mature 70S translation initiation complex. This Hahella chejuensis (strain KCTC 2396) protein is Translation initiation factor IF-1.